A 310-amino-acid chain; its full sequence is tRNA pseudouridine synthase B (310 aa).

The Nucleophile role is filled by D47.

This sequence belongs to the pseudouridine synthase TruB family. Type 1 subfamily.

The enzyme catalyses uridine(55) in tRNA = pseudouridine(55) in tRNA. Functionally, responsible for synthesis of pseudouridine from uracil-55 in the psi GC loop of transfer RNAs. The protein is tRNA pseudouridine synthase B of Caulobacter vibrioides (strain ATCC 19089 / CIP 103742 / CB 15) (Caulobacter crescentus).